Consider the following 306-residue polypeptide: uncharacterized protein (306 aa).

To L.delbrueckii similar ORF in glnA 5'region.

This is an uncharacterized protein from Lactobacillus delbrueckii subsp. bulgaricus.